Here is a 271-residue protein sequence, read N- to C-terminus: Cyclase-like protein 3 (271 aa).

Positions 1–21 are cleaved as a signal peptide; the sequence is MYHLLIIITTLSFSSINITFA.

The protein belongs to the Cyclase 1 superfamily.

The protein localises to the secreted. It is found in the extracellular space. It localises to the extracellular matrix. In Arabidopsis thaliana (Mouse-ear cress), this protein is Cyclase-like protein 3.